The sequence spans 202 residues: MAGSFAQLAKNAEKKKPSISVSKEPVENPPLKVYQLGDEALRTPANRIVKVDDAIRKLAKDMLITMYSSKGIGLAAPQVGIQKRLLVIDLNFEDPNSPPMVFINPEIISSSATVDTYEEGCLSIPGVYLNVLRPSSIKLSYRDEMGRPKKMNADGLMARCIQHEIDHLNGVCFVDKVTDEEELKKQLNENNFKRSDVIKATN.

The segment at 1-24 is disordered; the sequence is MAGSFAQLAKNAEKKKPSISVSKE. 2 residues coordinate Fe cation: C121 and H163. The active site involves E164. H167 is a binding site for Fe cation.

The protein belongs to the polypeptide deformylase family. Fe(2+) serves as cofactor.

The catalysed reaction is N-terminal N-formyl-L-methionyl-[peptide] + H2O = N-terminal L-methionyl-[peptide] + formate. In terms of biological role, removes the formyl group from the N-terminal Met of newly synthesized proteins. Requires at least a dipeptide for an efficient rate of reaction. N-terminal L-methionine is a prerequisite for activity but the enzyme has broad specificity at other positions. The chain is Peptide deformylase from Prochlorococcus marinus (strain NATL1A).